A 373-amino-acid polypeptide reads, in one-letter code: Pulmonary surfactant-associated protein B (373 aa).

The N-terminal stretch at 1 to 22 (MAKSHLLPWLLLLPILCGPGTA) is a signal peptide. Residues 23-187 (AAITYSLACA…PQTQDLSEQL (165 aa)) constitute a propeptide that is removed on maturation. In terms of domain architecture, Saposin A-type spans 24-64 (AITYSLACAQGPEFWCQSLEQALQCRALGHCLQEVWGHVEA). 3 consecutive Saposin B-type domains span residues 64–146 (ADDL…KPRH), 191–268 (PIPY…SSED), and 287–362 (QDSD…AAPF). Cystine bridges form between Cys68–Cys142, Cys71–Cys136, Cys99–Cys111, Cys195–Cys264, Cys198–Cys258, Cys222–Cys233, Cys291–Cys358, Cys294–Cys352, and Cys317–Cys327. Asn73 is a glycosylation site (N-linked (GlcNAc...) asparagine). Positions 267–373 (EDSAGPALPA…PLQCVHSPHF (107 aa)) are excised as a propeptide. Residue Asn303 is glycosylated (N-linked (GlcNAc...) asparagine).

As to quaternary structure, homodimer; disulfide-linked.

It localises to the secreted. It is found in the extracellular space. The protein localises to the surface film. Pulmonary surfactant-associated proteins promote alveolar stability by lowering the surface tension at the air-liquid interface in the peripheral air spaces. SP-B increases the collapse pressure of palmitic acid to nearly 70 millinewtons per meter. The protein is Pulmonary surfactant-associated protein B (SFTPB) of Bos taurus (Bovine).